The sequence spans 176 residues: MKNKTEYYDQFISKIPNFPKKGVLFYDITSVLLKPEVYSSLINEVYSFYNFKKIDCIAVVESRGYLIGAPLSLKMQLPLVLIRKEGKLPREVFSEEYELEYGFGRIEVHKDDVRMYSNILLIDDILATGGTLKSSAILLERAGGKVKDIFCFIELCAINGRQSLESYEVNSLVRYN.

This sequence belongs to the purine/pyrimidine phosphoribosyltransferase family. As to quaternary structure, homodimer.

It is found in the cytoplasm. The catalysed reaction is AMP + diphosphate = 5-phospho-alpha-D-ribose 1-diphosphate + adenine. It participates in purine metabolism; AMP biosynthesis via salvage pathway; AMP from adenine: step 1/1. Functionally, catalyzes a salvage reaction resulting in the formation of AMP, that is energically less costly than de novo synthesis. This Borreliella burgdorferi (strain ZS7) (Borrelia burgdorferi) protein is Adenine phosphoribosyltransferase.